A 1132-amino-acid polypeptide reads, in one-letter code: DNA-directed RNA polymerase I subunit RPA2 (1132 aa).

The segment at 1067-1098 (CMDCGSLLSPLLEKPPPNWSATRHRKTICLLC) adopts a C4-type zinc-finger fold.

The protein belongs to the RNA polymerase beta chain family. In terms of assembly, component of the RNA polymerase I (Pol I) complex consisting of at least 13 subunits.

The protein localises to the nucleus. The protein resides in the nucleolus. It localises to the chromosome. The catalysed reaction is RNA(n) + a ribonucleoside 5'-triphosphate = RNA(n+1) + diphosphate. Functionally, DNA-dependent RNA polymerase catalyzes the transcription of DNA into RNA using the four ribonucleoside triphosphates as substrates. Second largest core component of RNA polymerase I which synthesizes ribosomal RNA precursors. Proposed to contribute to the polymerase catalytic activity and forms the polymerase active center together with the largest subunit. Pol I is composed of mobile elements and RPA2 is part of the core element with the central large cleft and probably a clamp element that moves to open and close the cleft. This is DNA-directed RNA polymerase I subunit RPA2 (polr1b) from Danio rerio (Zebrafish).